We begin with the raw amino-acid sequence, 551 residues long: Tetrachloroethene reductive dehalogenase (551 aa).

Positions 1–39 (MGEINRRNFLKASMLGAAAAAVASASAVKGMVSPLVADA) form a signal peptide, tat-type signal. The 30-residue stretch at 411–440 (PRKFGVREFCRLCKKCADACPAQAISHEKD) folds into the 4Fe-4S ferredoxin-type 1 domain. Residues C420, C423, C426, C430, C467, C478, C481, and C485 each contribute to the [4Fe-4S] cluster site. A 4Fe-4S ferredoxin-type 2 domain is found at 478 to 496 (CANCVAVCSWNKVETWNHD).

It belongs to the PceA family. Monomer. [4Fe-4S] cluster serves as cofactor. Corrinoid is required as a cofactor. In terms of processing, predicted to be exported by the Tat system. The position of the signal peptide cleavage has been experimentally proven.

The protein resides in the cell membrane. The enzyme catalyses trichloroethene + chloride + A + H(+) = tetrachloroethene + AH2. The catalysed reaction is trichloroethene + AH2 = (Z)-1,2-dichloroethene + chloride + A + H(+). With respect to regulation, activity is inhibited by ammonium ions. Photoreversibly inactivated by 1-iodopropane. Its function is as follows. Catalyzes the reductive dechlorination of tetrachloroethene (PCE) to trichloroethene (TCE) and of trichloroethene to cis-1,2-dichloroethene (DCE). Can also use trichlorofluoroethene, tetrachloromethane, hexachloroethane, tetrachloroethane, trichloroethane and 1,1,1-trichloro-2,2,2-trifluoroethane. Menaquinone can act as the electron donor. Reduced methyl viologen can act as the artificial electron donor. This Dehalobacter restrictus (strain DSM 9455 / PER-K23) protein is Tetrachloroethene reductive dehalogenase.